Reading from the N-terminus, the 79-residue chain is D-alanyl carrier protein (79 aa).

Positions Met1–Gln77 constitute a Carrier domain. An O-(pantetheine 4'-phosphoryl)serine modification is found at Ser35.

Belongs to the DltC family. 4'-phosphopantetheine is transferred from CoA to a specific serine of apo-DCP.

The protein localises to the cytoplasm. It participates in cell wall biogenesis; lipoteichoic acid biosynthesis. In terms of biological role, carrier protein involved in the D-alanylation of lipoteichoic acid (LTA). The loading of thioester-linked D-alanine onto DltC is catalyzed by D-alanine--D-alanyl carrier protein ligase DltA. The DltC-carried D-alanyl group is further transferred to cell membrane phosphatidylglycerol (PG) by forming an ester bond, probably catalyzed by DltD. D-alanylation of LTA plays an important role in modulating the properties of the cell wall in Gram-positive bacteria, influencing the net charge of the cell wall. This chain is D-alanyl carrier protein, found in Streptococcus equi subsp. equi (strain 4047).